The primary structure comprises 401 residues: Chalcone synthase 6 (401 aa).

The active site involves C168.

Belongs to the thiolase-like superfamily. Chalcone/stilbene synthases family.

The enzyme catalyses (E)-4-coumaroyl-CoA + 3 malonyl-CoA + 3 H(+) = 2',4,4',6'-tetrahydroxychalcone + 3 CO2 + 4 CoA. The protein operates within secondary metabolite biosynthesis; flavonoid biosynthesis. Functionally, the primary product of this enzyme is 4,2',4',6'-tetrahydroxychalcone (also termed naringenin-chalcone or chalcone) which can under specific conditions spontaneously isomerize into naringenin. In Sorghum bicolor (Sorghum), this protein is Chalcone synthase 6 (CHS6).